The sequence spans 898 residues: MVWDRQTKMEYEWKPDEQGLQQILQLLKESQSPDTTIQRTVQQKLEQLNQYPDFNNYLIFVLTKLKSEDEPTRSLSGLILKNNVKAHFQNFPNGVTDFIKSECLNNIGDSSPLIRATVGILITTIASKGELQNWPDLLPKLCSLLDSEDYNTCEGAFGALQKICEDSAEILDSDVLDRPLNIMIPKFLQFFKHSSPKIRSHAVACVNQFIISRTQALMLHIDSFIENLFALAGDEEAEVRKNVCRALVMLLEVRMDRLLPHMHNIVEYMLQRTQDQDENVALEACEFWLTLAEQPICKDVLVRHLPKLIPVLVNGMKYSDIDIILLKGDVEEDETIPDSEQDIRPRFHRSRTVAQQHEEDGIEEEDDDDDEIDDDDTISDWNLRKCSAAALDVLANVYRDELLPHILPLLKELLFHHEWVVKESGILVLGAIAEGCMQGMIPYLPELIPHLIQCLSDKKALVRSITCWTLSRYAHWVVSQPPDTYLKPLMTELLKRILDSNKRVQEAACSAFATLEEEACTELVPYLAYILDTLVFAFSKYQHKNLLILYDAIGTLADSVGHHLNKPEYIQMLMPPLIQKWNMLKDEDKDLFPLLECLSSVATALQSGFLPYCEPVYQRCVNLVQKTLAQAMLNNAQPEQYEAPDKDFMIVALDLLSGLAEGLGGNIEQLVARSNILTLMYQCMQDKMPEVRQSSFALLGDLTKACFQHVKPCIADFMPILGTNLNPEFISVCNNATWAIGEISIQMGIEMQPYIPMVLHQLVEIINRPNTPKTLLENTAITIGRLGYVCPQEVAPMLQQFIRPWCTSLRNIRDNEEKDSAFRGICTMISVNPSGVIQDFIFFCDAVASWINPKDDLRDMFCKILHGFKNQVGDENWRRFSDQFPLPLKERLAAFYGV.

HEAT repeat units lie at residues 19 to 46 (GLQQ…QKLE), 51 to 89 (YPDF…AHFQ), 98 to 131 (FIKS…KGEL), 137 to 174 (LLPK…LDSD), 181 to 211 (NIMI…QFII), 224 to 251 (FIEN…VMLL), 263 to 290 (HNIV…FWLT), 306 to 397 (PKLI…LANV), 405 to 433 (HILP…GAIA), 445 to 472 (PELI…TLSR), 486 to 519 (LKPL…EEEA), 527 to 560 (LAYI…ADSV), 568 to 606 (EYIQ…TALQ), 614 to 665 (EPVY…GLGG), 676 to 707 (ILTL…KACF), 715 to 748 (ADFM…IQMG), 756 to 791 (PMVL…YVCP), 799 to 832 (QQFI…ISVN), 841 to 872 (IFFC…KNQV), and 875 to 895 (ENWR…LAAF). One can recognise an Importin N-terminal domain in the interval 41 to 109 (VQQKLEQLNQ…KSECLNNIGD (69 aa)). The tract at residues 347-374 (FHRSRTVAQQHEEDGIEEEDDDDDEIDD) is disordered. Residues 360–374 (DGIEEEDDDDDEIDD) are compositionally biased toward acidic residues.

It belongs to the importin beta family. Importin beta-2 subfamily. In terms of assembly, identified in a complex that contains TNPO1, RAN and RANBP1. Binds HNRPA1, HNRPA2, HNRNPDL, RPS7, RPL5 and RAN. Interacts with H2A, H2B, H3 and H4 histones. Interacts with isoform 1 and isoform 5 of ADAR/ADAR1 (via DRBM 3 domain). Interacts with SNAI1 (via zinc fingers); the interaction mediates SNAI1 nuclear import. Interacts with SNAI2 (via zinc fingers). Interacts with RPL23A (via BIB domain) and SRP19; this interaction is involved in RPL23A and SRP19 import into the nucleus. Interacts (via HEAT repeats 8-12) with BAP1 (via non-classical PY-NLS); this interaction is direct, is involved in BAP1 nuclear import and disrupts BAP1 homodimerization.

The protein localises to the cytoplasm. It is found in the nucleus. Functionally, functions in nuclear protein import as nuclear transport receptor. Serves as receptor for nuclear localization signals (NLS) in cargo substrates. May mediate docking of the importin/substrate complex to the nuclear pore complex (NPC) through binding to nucleoporin and the complex is subsequently translocated through the pore by an energy requiring, Ran-dependent mechanism. At the nucleoplasmic side of the NPC, Ran binds to the importin, the importin/substrate complex dissociates and importin is re-exported from the nucleus to the cytoplasm where GTP hydrolysis releases Ran. The directionality of nuclear import is thought to be conferred by an asymmetric distribution of the GTP- and GDP-bound forms of Ran between the cytoplasm and nucleus. Involved in nuclear import of M9-containing proteins. In vitro, binds directly to the M9 region of the heterogeneous nuclear ribonucleoproteins (hnRNP), A1 and A2 and mediates their nuclear import. Involved in hnRNP A1/A2 nuclear export. Mediates the nuclear import of ribosomal proteins RPL23A, RPS7 and RPL5. In vitro, mediates nuclear import of SRP19. Mediates the import of histones H2A, H2B, H3 and H4. Mediates nuclear import of ADAR/ADAR1 in a RanGTP-dependent manner. Main mediator of PR-DUB complex component BAP1 nuclear import; acts redundantly with the karyopherins KPNA1 and KPNA2. The sequence is that of Transportin-1 (Tnpo1) from Mus musculus (Mouse).